The primary structure comprises 529 residues: Lysine--tRNA ligase (529 aa).

The 'HIGH' region signature appears at 44–52 (PSGLPHIGT). A 'KMSKS' region motif is present at residues 290-294 (KISKS). Residue Lys293 coordinates ATP.

This sequence belongs to the class-I aminoacyl-tRNA synthetase family.

Its subcellular location is the cytoplasm. It carries out the reaction tRNA(Lys) + L-lysine + ATP = L-lysyl-tRNA(Lys) + AMP + diphosphate. In Rickettsia akari (strain Hartford), this protein is Lysine--tRNA ligase.